The sequence spans 402 residues: Deoxyguanosinetriphosphate triphosphohydrolase-like protein 2 (402 aa).

The region spanning 72–215 (RLTHSLEVAQ…MDLADEIAYA (144 aa)) is the HD domain.

It belongs to the dGTPase family. Type 2 subfamily.

This Vibrio cholerae serotype O1 (strain ATCC 39315 / El Tor Inaba N16961) protein is Deoxyguanosinetriphosphate triphosphohydrolase-like protein 2.